The primary structure comprises 361 residues: S-adenosylmethionine decarboxylase proenzyme (361 aa).

Catalysis depends on residues E13 and E16. Residue S73 is the Schiff-base intermediate with substrate; via pyruvic acid of the active site. Position 73 is a pyruvic acid (Ser); by autocatalysis (S73). C87 serves as the catalytic Proton donor; for catalytic activity. Active-site proton acceptor; for processing activity residues include S236 and H249.

It belongs to the eukaryotic AdoMetDC family. Pyruvate is required as a cofactor. Post-translationally, is synthesized initially as an inactive proenzyme. Formation of the active enzyme involves a self-maturation process in which the active site pyruvoyl group is generated from an internal serine residue via an autocatalytic post-translational modification. Two non-identical subunits are generated from the proenzyme in this reaction, and the pyruvate is formed at the N-terminus of the alpha chain, which is derived from the carboxyl end of the proenzyme. The post-translation cleavage follows an unusual pathway, termed non-hydrolytic serinolysis, in which the side chain hydroxyl group of the serine supplies its oxygen atom to form the C-terminus of the beta chain, while the remainder of the serine residue undergoes an oxidative deamination to produce ammonia and the pyruvoyl group blocking the N-terminus of the alpha chain.

It catalyses the reaction S-adenosyl-L-methionine + H(+) = S-adenosyl 3-(methylsulfanyl)propylamine + CO2. The protein operates within amine and polyamine biosynthesis; S-adenosylmethioninamine biosynthesis; S-adenosylmethioninamine from S-adenosyl-L-methionine: step 1/1. In Nicotiana tabacum (Common tobacco), this protein is S-adenosylmethionine decarboxylase proenzyme (SAMDC).